The chain runs to 576 residues: Peroxisomal targeting signal receptor (576 aa).

Residue C10 forms a Glycyl cysteine thioester (Cys-Gly) (interchain with G-Cter in ubiquitin) linkage. Residues 11–33 (AAGSNPLAQFTKHTQHDTSLQQS) form an amphipathic helix 1 (AH1) region. A Glycyl lysine isopeptide (Lys-Gly) (interchain with G-Cter in ubiquitin) cross-link involves residue K22. Residues 58–75 (RQQMDQFMQQQNNPAFNF) form an amphipathic helix 2 (AH2) region. Short sequence motifs (wxxxF/Y motif) lie at residues 100–104 (WNQEF) and 128–132 (WAQDF). The segment at 176 to 195 (AQMQQQNPAQAQTSEQSQTQ) is disordered. Residues 196–200 (WEDQF) carry the WxxxF/Y motif 3 motif. Positions 224 to 240 (FEQVWDDIQVSYADVEL) are amphipathic helix 4 (AH4). Positions 249–253 (WEKDF) match the WxxxF/Y motif 4 motif. TPR repeat units lie at residues 278–311 (PDAY…DPKH), 312–345 (VDAW…DPTN), 346–383 (LAAL…IASR), 384–421 (ARSS…ASMD), 422–455 (ADVQ…EPDK), 456–489 (ALNW…NPNF), and 490–523 (VRAR…HEVE).

Belongs to the peroxisomal targeting signal receptor family. Interacts (via WxxxF/Y and LVxEF motifs) with PEX14; promoting translocation through the PEX13-PEX14 docking complex. Interacts with PEX8. Post-translationally, a disulfide bond is created between Cys-10 and Cys-338 or Cys-444. Monoubiquitinated at Cys-10 by PEX2 during PEX5 passage through the retrotranslocation channel: monoubiquitination acts as a signal for PEX5 extraction and is required for proper export from peroxisomes and recycling. When PEX5 recycling is compromised, polyubiquitinated at Lys-22 by PEX10 during its passage through the retrotranslocation channel, leading to its degradation.

It is found in the peroxisome membrane. Its subcellular location is the cytoplasm. The protein localises to the cytosol. It localises to the peroxisome matrix. Its function is as follows. Receptor that mediates peroxisomal import of proteins containing a C-terminal PTS1-type tripeptide peroxisomal targeting signal (SKL-type). Binds to cargo proteins containing a PTS1 peroxisomal targeting signal in the cytosol, and translocates them into the peroxisome matrix by passing through the peroxisomal docking complex along with cargo proteins. PEX5 receptor is then retrotranslocated into the cytosol, leading to release of bound cargo in the peroxisome matrix, and reset for a subsequent peroxisome import cycle. Required for PEX7 ubiquitination. In Komagataella phaffii (strain GS115 / ATCC 20864) (Yeast), this protein is Peroxisomal targeting signal receptor.